Consider the following 494-residue polypeptide: Amidophosphoribosyltransferase (494 aa).

Positions 1-10 (MFNYSGLNEE) are excised as a propeptide. The active-site Nucleophile is Cys11. The Glutamine amidotransferase type-2 domain occupies 11 to 231 (CGVFGIWNHP…AGEYVVINDK (221 aa)). Residues Ser294, Asp356, and Asp357 each contribute to the Mg(2+) site.

It in the C-terminal section; belongs to the purine/pyrimidine phosphoribosyltransferase family. Mg(2+) is required as a cofactor.

The catalysed reaction is 5-phospho-beta-D-ribosylamine + L-glutamate + diphosphate = 5-phospho-alpha-D-ribose 1-diphosphate + L-glutamine + H2O. It functions in the pathway purine metabolism; IMP biosynthesis via de novo pathway; N(1)-(5-phospho-D-ribosyl)glycinamide from 5-phospho-alpha-D-ribose 1-diphosphate: step 1/2. In terms of biological role, catalyzes the formation of phosphoribosylamine from phosphoribosylpyrophosphate (PRPP) and glutamine. The chain is Amidophosphoribosyltransferase from Staphylococcus aureus (strain COL).